Reading from the N-terminus, the 66-residue chain is DNA-directed RNA polymerase subunit Rpo10 (66 aa).

The Zn(2+) site is built by Cys7, Cys10, Cys44, and Cys45.

It belongs to the archaeal Rpo10/eukaryotic RPB10 RNA polymerase subunit family. As to quaternary structure, part of the RNA polymerase complex. Zn(2+) is required as a cofactor.

The protein localises to the cytoplasm. It carries out the reaction RNA(n) + a ribonucleoside 5'-triphosphate = RNA(n+1) + diphosphate. Functionally, DNA-dependent RNA polymerase (RNAP) catalyzes the transcription of DNA into RNA using the four ribonucleoside triphosphates as substrates. The chain is DNA-directed RNA polymerase subunit Rpo10 from Sulfurisphaera tokodaii (strain DSM 16993 / JCM 10545 / NBRC 100140 / 7) (Sulfolobus tokodaii).